We begin with the raw amino-acid sequence, 101 residues long: Large ribosomal subunit protein uL23 (101 aa).

It belongs to the universal ribosomal protein uL23 family. In terms of assembly, part of the 50S ribosomal subunit. Contacts protein L29, and trigger factor when it is bound to the ribosome.

One of the early assembly proteins it binds 23S rRNA. One of the proteins that surrounds the polypeptide exit tunnel on the outside of the ribosome. Forms the main docking site for trigger factor binding to the ribosome. This Corynebacterium glutamicum (strain R) protein is Large ribosomal subunit protein uL23.